The primary structure comprises 456 residues: Probable galactarate/D-glucarate transporter GudP (456 aa).

The next 10 helical transmembrane spans lie at Tyr-11 to Ile-31, Tyr-51 to Leu-71, Lys-78 to Tyr-96, Ile-102 to Ala-119, Ile-246 to Val-266, Gly-280 to Ile-300, Thr-317 to Ala-337, Val-341 to Val-361, Phe-381 to Gly-401, and Ser-408 to Ile-428.

This sequence belongs to the major facilitator superfamily. Phthalate permease family.

It localises to the cell inner membrane. The enzyme catalyses galactarate(in) + H(+)(in) = galactarate(out) + H(+)(out). It catalyses the reaction D-glucarate(in) + H(+)(in) = D-glucarate(out) + H(+)(out). Its function is as follows. Probably involved in the uptake of galactarate and/or D-glucarate. The protein is Probable galactarate/D-glucarate transporter GudP (gudP) of Pseudomonas putida (Arthrobacter siderocapsulatus).